Here is a 290-residue protein sequence, read N- to C-terminus: Lipoyl synthase (290 aa).

Residues cysteine 38, cysteine 43, cysteine 49, cysteine 64, cysteine 68, cysteine 71, and serine 277 each contribute to the [4Fe-4S] cluster site. A Radical SAM core domain is found at 50-266 (WSKGTATFLL…REIALDAGFR (217 aa)).

The protein belongs to the radical SAM superfamily. Lipoyl synthase family. It depends on [4Fe-4S] cluster as a cofactor.

The protein resides in the cytoplasm. The enzyme catalyses [[Fe-S] cluster scaffold protein carrying a second [4Fe-4S](2+) cluster] + N(6)-octanoyl-L-lysyl-[protein] + 2 oxidized [2Fe-2S]-[ferredoxin] + 2 S-adenosyl-L-methionine + 4 H(+) = [[Fe-S] cluster scaffold protein] + N(6)-[(R)-dihydrolipoyl]-L-lysyl-[protein] + 4 Fe(3+) + 2 hydrogen sulfide + 2 5'-deoxyadenosine + 2 L-methionine + 2 reduced [2Fe-2S]-[ferredoxin]. It participates in protein modification; protein lipoylation via endogenous pathway; protein N(6)-(lipoyl)lysine from octanoyl-[acyl-carrier-protein]: step 2/2. Its function is as follows. Catalyzes the radical-mediated insertion of two sulfur atoms into the C-6 and C-8 positions of the octanoyl moiety bound to the lipoyl domains of lipoate-dependent enzymes, thereby converting the octanoylated domains into lipoylated derivatives. This chain is Lipoyl synthase, found in Chlorobaculum tepidum (strain ATCC 49652 / DSM 12025 / NBRC 103806 / TLS) (Chlorobium tepidum).